The chain runs to 443 residues: Magnesium transporter MRS2 homolog, mitochondrial (443 aa).

A mitochondrion-targeting transit peptide spans 1-49 (MECLRSLPCLLPRAMRLPRRTLCALALDLTSVAPPVAASGRRANLIGRS). At 50 to 339 (RAAQLCEPGR…SHRNVMMRLN (290 aa)) the chain is on the mitochondrial matrix side. Residues Glu243, Thr246, Asp247, Glu312, and Gly329 each coordinate Mg(2+). Residues 340 to 359 (LQLTMGTFSLSLFGLMGVAF) traverse the membrane as a helical segment. Gly360 and Asn362 together coordinate Mg(2+). Residues 360 to 362 (GMN) carry the GMN motif motif. Residues 360-370 (GMNLESSLEED) are Mitochondrial intermembrane-facing. The helical transmembrane segment at 371–401 (HRIFWLITGIMFMGSGLIWRRLLSFLGRQLE) threads the bilayer. The Mitochondrial matrix portion of the chain corresponds to 402 to 443 (APLPPMMASLPKKTLLADRSMELKNSLRLDGLGSGRSILTNR).

It belongs to the CorA metal ion transporter (MIT) (TC 1.A.35) family. Homopentamer.

The protein localises to the mitochondrion inner membrane. With respect to regulation, may be regulated by calcium ions. In terms of biological role, magnesium transporter that mediates the influx of magnesium into the mitochondrial matrix and regulates magnesium metabolism. Also permeable to calcium, sodium and potassium ions. Required for normal expression of the mitochondrial respiratory complex I subunits. May play a role in maintaining the inner mitochondrial membrane potential. The protein is Magnesium transporter MRS2 homolog, mitochondrial (MRS2) of Pongo abelii (Sumatran orangutan).